Here is a 124-residue protein sequence, read N- to C-terminus: Small ribosomal subunit protein bS16 (124 aa).

Residues 81–90 (LKKRPARNNP) show a composition bias toward basic residues. Residues 81-124 (LKKRPARNNPHKGEPGKKAQERIAAAKQAAEDAAAAAEADSASE) are disordered. Residues 91-101 (HKGEPGKKAQE) are compositionally biased toward basic and acidic residues. The segment covering 102 to 124 (RIAAAKQAAEDAAAAAEADSASE) has biased composition (low complexity).

The protein belongs to the bacterial ribosomal protein bS16 family.

The protein is Small ribosomal subunit protein bS16 of Bartonella tribocorum (strain CIP 105476 / IBS 506).